A 71-amino-acid polypeptide reads, in one-letter code: Defensin-like protein 292 (71 aa).

Disulfide bonds link Cys44-Cys64, Cys50-Cys69, and Cys56-Cys71.

The protein belongs to the DEFL family.

The polypeptide is Defensin-like protein 292 (Arabidopsis thaliana (Mouse-ear cress)).